The primary structure comprises 376 residues: Chaperone protein DnaJ 2 (376 aa).

In terms of domain architecture, J spans 5 to 70 (DYYEVLGVNR…QKRAAYDRYG (66 aa)). A CR-type zinc finger spans residues 135–213 (GADKTIRIPT…CGGAGRVKRQ (79 aa)). Zn(2+) is bound by residues cysteine 148, cysteine 151, cysteine 165, cysteine 168, cysteine 187, cysteine 190, cysteine 201, and cysteine 204. 4 CXXCXGXG motif repeats span residues 148–155 (CETCHGSG), 165–172 (CPTCGGAG), 187–194 (CPKCHGTG), and 201–208 (CRDCGGAG).

Belongs to the DnaJ family. In terms of assembly, homodimer. Requires Zn(2+) as cofactor.

Its subcellular location is the cytoplasm. Functionally, participates actively in the response to hyperosmotic and heat shock by preventing the aggregation of stress-denatured proteins and by disaggregating proteins, also in an autonomous, DnaK-independent fashion. Unfolded proteins bind initially to DnaJ; upon interaction with the DnaJ-bound protein, DnaK hydrolyzes its bound ATP, resulting in the formation of a stable complex. GrpE releases ADP from DnaK; ATP binding to DnaK triggers the release of the substrate protein, thus completing the reaction cycle. Several rounds of ATP-dependent interactions between DnaJ, DnaK and GrpE are required for fully efficient folding. Also involved, together with DnaK and GrpE, in the DNA replication of plasmids through activation of initiation proteins. In Aromatoleum aromaticum (strain DSM 19018 / LMG 30748 / EbN1) (Azoarcus sp. (strain EbN1)), this protein is Chaperone protein DnaJ 2.